A 632-amino-acid polypeptide reads, in one-letter code: Gamma-aminobutyric acid receptor subunit theta (632 aa).

The first 21 residues, 1-21 (MGIRGMLRAAVILLLIRTWLA), serve as a signal peptide directing secretion. Topologically, residues 22-268 (EGNYPSPIPK…FQVQREVNSY (247 aa)) are extracellular. The N-linked (GlcNAc...) asparagine glycan is linked to N127. A disulfide bridge links C183 with C197. A helical membrane pass occupies residues 269 to 289 (LVQVYWPTVLTTITSWISFWM). At 290–297 (NYDSSAAR) the chain is on the cytoplasmic side. Residues 298–315 (VTIGLTSMLILTTIDSHL) form a helical membrane-spanning segment. Over 316-326 (RDKLPNISCIK) the chain is Extracellular. Residues 327–347 (AIDIYILVCLFFVFLSLLEYV) traverse the membrane as a helical segment. Over 348-611 (YINYLFYSRG…DYVPKVDKWS (264 aa)) the chain is Cytoplasmic. Disordered stretches follow at residues 410–458 (SPES…STSE) and 491–523 (HGVTHDHEDSNESLSSDERHGHGPSGKPMLHHG). Polar residues predominate over residues 413–425 (SLGSLTSTSEQAQ). Positions 426–439 (LATSESLSPLTSLS) are enriched in low complexity. Residues 448–458 (ESLSDLPSTSE) are compositionally biased toward polar residues. A compositionally biased stretch (basic and acidic residues) spans 491–511 (HGVTHDHEDSNESLSSDERHG). The chain crosses the membrane as a helical span at residues 612–632 (RFLFPLAFGLFNIVYWVYHMY).

This sequence belongs to the ligand-gated ion channel (TC 1.A.9) family. Gamma-aminobutyric acid receptor (TC 1.A.9.5) subfamily. GABRQ sub-subfamily. As to quaternary structure, heteropentamer, formed by a combination of alpha (GABRA1-6), beta (GABRB1-3), gamma (GABRG1-3), delta (GABRD), epsilon (GABRE), rho (GABRR1-3), pi (GABRP) and theta (GABRQ) chains, each subunit exhibiting distinct physiological and pharmacological properties. As to expression, expressed in brain.

The protein localises to the postsynaptic cell membrane. The protein resides in the cell membrane. It catalyses the reaction chloride(in) = chloride(out). Potentiated by etomidate, propofol, pregnanolone and pentobarbital. Functionally, theta subunit of the heteropentameric ligand-gated chloride channel gated by gamma-aminobutyric acid (GABA), a major inhibitory neurotransmitter in the brain. GABA-gated chloride channels, also named GABA(A) receptors (GABAAR), consist of five subunits arranged around a central pore and contain GABA active binding site(s) located at the alpha and beta subunit interfaces. When activated by GABA, GABAARs selectively allow the flow of chloride anions across the cell membrane down their electrochemical gradient. The sequence is that of Gamma-aminobutyric acid receptor subunit theta from Homo sapiens (Human).